Reading from the N-terminus, the 205-residue chain is Nucleoside triphosphate pyrophosphatase (205 aa).

The active-site Proton acceptor is Asp76.

Belongs to the Maf family. Requires a divalent metal cation as cofactor.

It localises to the cytoplasm. It carries out the reaction a ribonucleoside 5'-triphosphate + H2O = a ribonucleoside 5'-phosphate + diphosphate + H(+). It catalyses the reaction a 2'-deoxyribonucleoside 5'-triphosphate + H2O = a 2'-deoxyribonucleoside 5'-phosphate + diphosphate + H(+). In terms of biological role, nucleoside triphosphate pyrophosphatase. May have a dual role in cell division arrest and in preventing the incorporation of modified nucleotides into cellular nucleic acids. In Orientia tsutsugamushi (strain Boryong) (Rickettsia tsutsugamushi), this protein is Nucleoside triphosphate pyrophosphatase.